Reading from the N-terminus, the 172-residue chain is Translocon-associated protein subunit delta (172 aa).

Residues 1-24 (MAALASLGALALLLLSGLSCCSEA) form the signal peptide. A disulfide bridge links cysteine 25 with cysteine 56. Topologically, residues 25 to 143 (CVEPQITPSY…SVDHRGTWNG (119 aa)) are lumenal. A Glycyl lysine isopeptide (Lys-Gly) (interchain with G-Cter in ubiquitin) cross-link involves residue lysine 72. Residues 144-164 (PWVSTEVLAAAIGLVIYYLAF) form a helical membrane-spanning segment. Residues 165 to 172 (SAKSHIQA) are Cytoplasmic-facing.

It belongs to the TRAP-delta family. As to quaternary structure, heterotetramer of TRAP-alpha, TRAP-beta, TRAP-delta and TRAP-gamma.

The protein localises to the endoplasmic reticulum membrane. In terms of biological role, TRAP proteins are part of a complex whose function is to bind calcium to the ER membrane and thereby regulate the retention of ER resident proteins. This chain is Translocon-associated protein subunit delta (SSR4), found in Bos taurus (Bovine).